Here is a 607-residue protein sequence, read N- to C-terminus: Tyrosine-protein kinase RYK (607 aa).

Residues M1–G20 are disordered. The N-terminal stretch at M1–P25 is a signal peptide. The Extracellular portion of the chain corresponds to P26–R227. One can recognise a WIF domain in the interval L66–C194. N139, N174, N178, N182, and N209 each carry an N-linked (GlcNAc...) asparagine glycan. A disulfide bond links C159 and C194. Residues V228–A248 form a helical membrane-spanning segment. Residues V249 to V607 are Cytoplasmic-facing. Residues A266–Q282 are compositionally biased toward low complexity. Residues A266 to N290 are disordered. The Protein kinase domain occupies I330 to L603. ATP-binding positions include L336–I344 and K364. D465 functions as the Proton acceptor in the catalytic mechanism. Residue Y495 is modified to Phosphotyrosine; by autocatalysis.

Belongs to the protein kinase superfamily. Tyr protein kinase family. As to quaternary structure, interacts with DVL1 (via PDZ domain). Proteolytically cleaved, in part by presenilin, in response to WNT3 stimulation. Cleavage occurs during neuronal differentiation. Observed in all the tissues examined.

Its subcellular location is the membrane. It is found in the nucleus. It localises to the cytoplasm. The catalysed reaction is L-tyrosyl-[protein] + ATP = O-phospho-L-tyrosyl-[protein] + ADP + H(+). Functionally, may be a coreceptor along with FZD8 of Wnt proteins, such as WNT1, WNT3, WNT3A and WNT5A. Involved in neuron differentiation, axon guidance, corpus callosum establishment and neurite outgrowth. In response to WNT3 stimulation, receptor C-terminal cleavage occurs in its transmembrane region and allows the C-terminal intracellular product to translocate from the cytoplasm to the nucleus where it plays a crucial role in neuronal development. This chain is Tyrosine-protein kinase RYK, found in Homo sapiens (Human).